The chain runs to 212 residues: Lipid A acyltransferase PagP (212 aa).

An N-terminal signal peptide occupies residues 1–24; that stretch reads MYLKRTLITLSLITLPIVPFLSYA. Residues 36–47 show a composition bias toward polar residues; the sequence is NLAPVTVDSSDP. Residues 36–56 are disordered; the sequence is NLAPVTVDSSDPVSDKQGESW. Catalysis depends on residues histidine 84, aspartate 127, and serine 128.

The protein belongs to the lipid A palmitoyltransferase family. As to quaternary structure, homodimer.

The protein resides in the cell outer membrane. The enzyme catalyses a lipid A + a 1,2-diacyl-sn-glycero-3-phosphocholine = a hepta-acyl lipid A + a 2-acyl-sn-glycero-3-phosphocholine. The catalysed reaction is a lipid IVA + a 1,2-diacyl-sn-glycero-3-phosphocholine = a lipid IVB + a 2-acyl-sn-glycero-3-phosphocholine. It catalyses the reaction a lipid IIA + a 1,2-diacyl-sn-glycero-3-phosphocholine = a lipid IIB + a 2-acyl-sn-glycero-3-phosphocholine. Functionally, transfers a fatty acid residue from the sn-1 position of a phospholipid to the N-linked hydroxyfatty acid chain on the proximal unit of lipid A or its precursors. This chain is Lipid A acyltransferase PagP, found in Pectobacterium carotovorum subsp. carotovorum (strain PC1).